We begin with the raw amino-acid sequence, 441 residues long: Pre-mRNA-splicing factor PRP46 (441 aa).

2 disordered regions span residues 1 to 22 (MPVAKDLFPEYGTLATGENEPS) and 81 to 107 (MGASSSALTKHTPSASQPTTHDSLTNL). Residues 83-107 (ASSSALTKHTPSASQPTTHDSLTNL) are compositionally biased toward polar residues. 7 WD repeats span residues 130–169 (GHQGWVRSVCVEPENQWFATGSADKTIKIWDLATGKLRLT), 172–211 (GHIMGVRALGVSPRHPYMFSGGEDKMVKCWDLETNKVVRH), 214–253 (GHLSAVYSLDIHPTLDVLVSAGRDAVARVWDIRTRDPVVV), 256–295 (GHKSTINRVKFQASEPQVITASADETVRLWNLQAGKTMTT), 298–336 (HHKKSVRGLTLHPEEFTFSTASANSSKQWKCPEGDLVLN), 339–379 (DQNA…QSTQ), and 388–427 (ESENGIFDSSFDKTGLRLITCEADKSIKMWREKPNATAES).

Belongs to the WD repeat PRL1/PRL2 family. Associated with the spliceosome.

It localises to the cytoplasm. The protein resides in the nucleus. Involved in pre-mRNA splicing and required for cell cycle progression at G2/M. This chain is Pre-mRNA-splicing factor PRP46 (PRP46), found in Yarrowia lipolytica (strain CLIB 122 / E 150) (Yeast).